The sequence spans 77 residues: Acyl carrier protein (77 aa).

One can recognise a Carrier domain in the interval 2–77 (STIEERVKKI…EAIDYVVSHQ (76 aa)). An O-(pantetheine 4'-phosphoryl)serine modification is found at Ser37.

Belongs to the acyl carrier protein (ACP) family. Post-translationally, 4'-phosphopantetheine is transferred from CoA to a specific serine of apo-ACP by AcpS. This modification is essential for activity because fatty acids are bound in thioester linkage to the sulfhydryl of the prosthetic group.

It is found in the cytoplasm. It functions in the pathway lipid metabolism; fatty acid biosynthesis. In terms of biological role, carrier of the growing fatty acid chain in fatty acid biosynthesis. This Oceanospirillum linum protein is Acyl carrier protein.